A 361-amino-acid polypeptide reads, in one-letter code: Queuine tRNA-ribosyltransferase (361 aa).

The active-site Proton acceptor is D92. Residues 92 to 96 (DSGGF), D146, Q189, and G216 contribute to the substrate site. Residues 247-253 (GVGKPAD) are RNA binding. D266 acts as the Nucleophile in catalysis. Positions 271 to 275 (TRSGR) are RNA binding; important for wobble base 34 recognition. The Zn(2+) site is built by C304, C306, C309, and H335.

The protein belongs to the queuine tRNA-ribosyltransferase family. Homodimer. Within each dimer, one monomer is responsible for RNA recognition and catalysis, while the other monomer binds to the replacement base PreQ1. Requires Zn(2+) as cofactor.

The enzyme catalyses 7-aminomethyl-7-carbaguanine + guanosine(34) in tRNA = 7-aminomethyl-7-carbaguanosine(34) in tRNA + guanine. It participates in tRNA modification; tRNA-queuosine biosynthesis. Functionally, catalyzes the base-exchange of a guanine (G) residue with the queuine precursor 7-aminomethyl-7-deazaguanine (PreQ1) at position 34 (anticodon wobble position) in tRNAs with GU(N) anticodons (tRNA-Asp, -Asn, -His and -Tyr). Catalysis occurs through a double-displacement mechanism. The nucleophile active site attacks the C1' of nucleotide 34 to detach the guanine base from the RNA, forming a covalent enzyme-RNA intermediate. The proton acceptor active site deprotonates the incoming PreQ1, allowing a nucleophilic attack on the C1' of the ribose to form the product. After dissociation, two additional enzymatic reactions on the tRNA convert PreQ1 to queuine (Q), resulting in the hypermodified nucleoside queuosine (7-(((4,5-cis-dihydroxy-2-cyclopenten-1-yl)amino)methyl)-7-deazaguanosine). The protein is Queuine tRNA-ribosyltransferase of Rickettsia rickettsii (strain Iowa).